The chain runs to 126 residues: Glycine cleavage system H protein (126 aa).

The Lipoyl-binding domain maps to Thr22–Lys104. Lys63 carries the post-translational modification N6-lipoyllysine.

Belongs to the GcvH family. In terms of assembly, the glycine cleavage system is composed of four proteins: P, T, L and H. (R)-lipoate is required as a cofactor.

Its function is as follows. The glycine cleavage system catalyzes the degradation of glycine. The H protein shuttles the methylamine group of glycine from the P protein to the T protein. In terms of biological role, is also involved in protein lipoylation via its role as an octanoyl/lipoyl carrier protein intermediate. This chain is Glycine cleavage system H protein, found in Staphylococcus carnosus (strain TM300).